The primary structure comprises 198 residues: Peptide deformylase (198 aa).

Fe cation is bound by residues C123 and H170. E171 is an active-site residue. Residue H174 participates in Fe cation binding.

It belongs to the polypeptide deformylase family. Fe(2+) serves as cofactor.

It carries out the reaction N-terminal N-formyl-L-methionyl-[peptide] + H2O = N-terminal L-methionyl-[peptide] + formate. Functionally, removes the formyl group from the N-terminal Met of newly synthesized proteins. Requires at least a dipeptide for an efficient rate of reaction. N-terminal L-methionine is a prerequisite for activity but the enzyme has broad specificity at other positions. The protein is Peptide deformylase of Mycoplasmopsis pulmonis (strain UAB CTIP) (Mycoplasma pulmonis).